Reading from the N-terminus, the 192-residue chain is MKELFLIIGAPGSGKTTDASLIAQADATNITHYSTGDLLRAEVASGSELGKTIDSFISKGNLVPLDVVVNTIVCALKAAPTKTIIIDGYPRSVEQMMEFDKVLSEQNEICLKGVIEVRVSEEVAKERVLGRNRGADDNEEVFYNRMKVYTEPLNEILDFYQKKKLHFIIDGERTIEPIVADMKELIKKIQSI.

Position 12 to 17 (12 to 17 (GSGKTT)) interacts with ATP. The interval 34–63 (STGDLLRAEVASGSELGKTIDSFISKGNLV) is NMP. Residues Thr35, Arg40, 61–63 (NLV), 88–91 (GYPR), and Gln95 each bind AMP. Residues 130–136 (GRNRGAD) are LID. Arg131 contacts ATP. Arg133 and Arg145 together coordinate AMP. Position 173 (Arg173) interacts with ATP.

This sequence belongs to the adenylate kinase family. In terms of assembly, monomer.

Its subcellular location is the cytoplasm. The catalysed reaction is AMP + ATP = 2 ADP. The protein operates within purine metabolism; AMP biosynthesis via salvage pathway; AMP from ADP: step 1/1. Functionally, catalyzes the reversible transfer of the terminal phosphate group between ATP and AMP. Plays an important role in cellular energy homeostasis and in adenine nucleotide metabolism. The protein is Adenylate kinase of Campylobacter jejuni subsp. jejuni serotype O:6 (strain 81116 / NCTC 11828).